Reading from the N-terminus, the 304-residue chain is Acetyl-coenzyme A carboxylase carboxyl transferase subunit beta (304 aa).

The region spanning 25-294 (LWIKCPETGE…KAIKRDTATE (270 aa)) is the CoA carboxyltransferase N-terminal domain.

This sequence belongs to the AccD/PCCB family. Acetyl-CoA carboxylase is a heterohexamer composed of biotin carboxyl carrier protein (AccB), biotin carboxylase (AccC) and two subunits each of ACCase subunit alpha (AccA) and ACCase subunit beta (AccD).

It localises to the cytoplasm. It carries out the reaction N(6)-carboxybiotinyl-L-lysyl-[protein] + acetyl-CoA = N(6)-biotinyl-L-lysyl-[protein] + malonyl-CoA. The protein operates within lipid metabolism; malonyl-CoA biosynthesis; malonyl-CoA from acetyl-CoA: step 1/1. Functionally, component of the acetyl coenzyme A carboxylase (ACC) complex. Biotin carboxylase (BC) catalyzes the carboxylation of biotin on its carrier protein (BCCP) and then the CO(2) group is transferred by the transcarboxylase to acetyl-CoA to form malonyl-CoA. In Sinorhizobium medicae (strain WSM419) (Ensifer medicae), this protein is Acetyl-coenzyme A carboxylase carboxyl transferase subunit beta.